Here is a 618-residue protein sequence, read N- to C-terminus: MATSVDQISKSLSTLGLQDLPVFREADIHHNPVDVYRSYISSELSKINGVDVSLIYPALETSISKDSADLNLPVPRLRVKGKPQELAQKWAEAFPKDLVEVTANGIFLRFNFNGPSLTKLILPIIWEQRENYGRNESGSGKVAVIEFSSPNIAKPFHAGHLRSTIIGSFLANLHESQGWKVHRVNYLGDWGKQFGLLAIGYKKYGDEDQLKSNPIRHLYDVYVKVNADATEEDEKIQKDKAEAESKGLPYTPPLSLHDKAREFFKRMEDGDEESLKVWARFRDLSITKLKDTYDRLNIHYDEYDGESQVSLELMNKMVDELRSLNLIEEDGGALLIDLSKHDKKLGKAIVQKRDGTTLYLTRDIGTAYKRYEKYKFDKSIYVVSSQQDMYFSQLFKIFELMGFDWAKKCVHINYGLVQGMSTRKGKAVFLDDIMEVAKEEMHKVMQKNEEKYAQVENPEEVADIVGKTAIRIQDSTGKRINNYAFDWSRMTSFEGDTGPYLQYAHSRLSSVRRNVNYTDEEIMGANLELLTEPDAYDLVRLLGQYPDVLKNAFRFQETSTVVTYLFKLTHAVSKLYDILWVRGRERDIQLARLALFGAAKQVLNNGMTLLGLTPLERM.

Interaction with tRNA regions lie at residues 60–61 (ET) and 104–109 (NGIFLR). Residues 146 to 151 (EFSSPN), histidine 160, tyrosine 359, aspartate 363, and glutamine 387 contribute to the L-arginine site. The 'HIGH' region motif lies at 149–160 (SPNIAKPFHAGH). The interval 496-510 (DTGPYLQYAHSRLSS) is interaction with tRNA.

The protein belongs to the class-I aminoacyl-tRNA synthetase family.

Its subcellular location is the cytoplasm. It carries out the reaction tRNA(Arg) + L-arginine + ATP = L-arginyl-tRNA(Arg) + AMP + diphosphate. Its function is as follows. Forms part of a macromolecular complex that catalyzes the attachment of specific amino acids to cognate tRNAs during protein synthesis. This chain is Probable arginine--tRNA ligase, cytoplasmic (mrs1), found in Schizosaccharomyces pombe (strain 972 / ATCC 24843) (Fission yeast).